A 317-amino-acid polypeptide reads, in one-letter code: Type II restriction enzyme NaeI (317 aa).

As to quaternary structure, homodimer.

It carries out the reaction Endonucleolytic cleavage of DNA to give specific double-stranded fragments with terminal 5'-phosphates.. Its function is as follows. An E and P subtype restriction enzyme that recognizes the double-stranded unmethylated sequence 5'-GCCGGC-3' and cleaves after C-3. In Lentzea aerocolonigenes (Lechevalieria aerocolonigenes), this protein is Type II restriction enzyme NaeI.